The following is a 459-amino-acid chain: Fibrinogen C domain-containing protein 1 (459 aa).

The segment at 1–22 is disordered; the sequence is MVHERWKTVGSASQLEDRPRDK. Over 1–33 the chain is Cytoplasmic; sequence MVHERWKTVGSASQLEDRPRDKPQRASCSYVLC. The chain crosses the membrane as a helical; Signal-anchor for type II membrane protein span at residues 34-54; sequence TVLLSLAVLLAVAVTGVVLFL. Over 55–459 the chain is Extracellular; it reads NHTHTPGTAP…MKIRPVREDR (405 aa). Positions 233–456 constitute a Fibrinogen C-terminal domain; it reads CANGSRPRDC…FSEMKIRPVR (224 aa). Cysteine 242 and cysteine 271 form a disulfide bridge. Residue asparagine 338 is glycosylated (N-linked (GlcNAc...) asparagine). Ca(2+) contacts are provided by aspartate 391 and aspartate 393. The cysteines at positions 399 and 412 are disulfide-linked.

In terms of assembly, homotetramer; disulfide-linked.

Its subcellular location is the membrane. In terms of biological role, acetyl group-binding receptor which shows a high-affinity and calcium-dependent binding to acetylated structures such as chitin, some N-acetylated carbohydrates, and amino acids, but not to their non-acetylated counterparts. Can facilitate the endocytosis of acetylated components. In Mus musculus (Mouse), this protein is Fibrinogen C domain-containing protein 1 (Fibcd1).